Consider the following 108-residue polypeptide: Phosphoribosyl-ATP pyrophosphatase (108 aa).

Residues 88 to 108 (VENELDRREGRSGIEEKASRK) are disordered. Positions 91-108 (ELDRREGRSGIEEKASRK) are enriched in basic and acidic residues.

The protein belongs to the PRA-PH family.

It localises to the cytoplasm. The catalysed reaction is 1-(5-phospho-beta-D-ribosyl)-ATP + H2O = 1-(5-phospho-beta-D-ribosyl)-5'-AMP + diphosphate + H(+). It participates in amino-acid biosynthesis; L-histidine biosynthesis; L-histidine from 5-phospho-alpha-D-ribose 1-diphosphate: step 2/9. The sequence is that of Phosphoribosyl-ATP pyrophosphatase from Paracoccus denitrificans (strain Pd 1222).